We begin with the raw amino-acid sequence, 439 residues long: Histidine--tRNA ligase (439 aa).

It belongs to the class-II aminoacyl-tRNA synthetase family. Homodimer.

It localises to the cytoplasm. The catalysed reaction is tRNA(His) + L-histidine + ATP = L-histidyl-tRNA(His) + AMP + diphosphate + H(+). The sequence is that of Histidine--tRNA ligase from Leptospira interrogans serogroup Icterohaemorrhagiae serovar copenhageni (strain Fiocruz L1-130).